Here is a 525-residue protein sequence, read N- to C-terminus: Glutamate--cysteine ligase (525 aa).

Belongs to the glutamate--cysteine ligase type 1 family. Type 1 subfamily.

It carries out the reaction L-cysteine + L-glutamate + ATP = gamma-L-glutamyl-L-cysteine + ADP + phosphate + H(+). The protein operates within sulfur metabolism; glutathione biosynthesis; glutathione from L-cysteine and L-glutamate: step 1/2. This Hahella chejuensis (strain KCTC 2396) protein is Glutamate--cysteine ligase.